A 501-amino-acid polypeptide reads, in one-letter code: Aldehyde dehydrogenase 1A1 (501 aa).

Ser2 is subject to N-acetylserine. 2 positions are modified to N6-acetyllysine: Lys91 and Lys128. Residues 167–170 (IPWN), 193–196 (KPAE), 226–227 (GP), and 246–247 (GS) each bind NAD(+). Lys252 is modified (N6-acetyllysine). Residue Glu269 is the Proton acceptor of the active site. 269-271 (ELG) is a binding site for NAD(+). The active-site Nucleophile is Cys303. The tract at residues 336–501 (LTPGVTQGPQ…VTVKISQKNS (166 aa)) is mediates interaction with PRMT3. Position 337 is a phosphothreonine (Thr337). NAD(+) is bound at residue 349 to 353 (EQYDK). An N6-acetyllysine mark is found at Lys353 and Lys367. 400–402 (EIF) lines the NAD(+) pocket. N6-acetyllysine is present on Lys410. At Ser413 the chain carries Phosphoserine. 3 positions are modified to N6-acetyllysine: Lys419, Lys435, and Lys495.

It belongs to the aldehyde dehydrogenase family. In terms of assembly, homotetramer. Interacts with PRMT3; the interaction is direct, inhibits ALDH1A1 aldehyde dehydrogenase activity and is independent of the methyltransferase activity of PRMT3. The N-terminus is blocked most probably by acetylation. Expressed by erythrocytes (at protein level).

The protein localises to the cytoplasm. The protein resides in the cytosol. It is found in the cell projection. It localises to the axon. The catalysed reaction is an aldehyde + NAD(+) + H2O = a carboxylate + NADH + 2 H(+). The enzyme catalyses all-trans-retinal + NAD(+) + H2O = all-trans-retinoate + NADH + 2 H(+). It catalyses the reaction 9-cis-retinal + NAD(+) + H2O = 9-cis-retinoate + NADH + 2 H(+). It carries out the reaction 11-cis-retinal + NAD(+) + H2O = 11-cis-retinoate + NADH + 2 H(+). The catalysed reaction is 13-cis-retinal + NAD(+) + H2O = 13-cis-retinoate + NADH + 2 H(+). The enzyme catalyses 3-deoxyglucosone + NAD(+) + H2O = 2-dehydro-3-deoxy-D-gluconate + NADH + 2 H(+). It catalyses the reaction (E)-4-hydroxynon-2-enal + NAD(+) + H2O = (E)-4-hydroxynon-2-enoate + NADH + 2 H(+). It carries out the reaction malonaldehyde + NAD(+) + H2O = 3-oxopropanoate + NADH + 2 H(+). The catalysed reaction is hexanal + NAD(+) + H2O = hexanoate + NADH + 2 H(+). The enzyme catalyses propanal + NAD(+) + H2O = propanoate + NADH + 2 H(+). It catalyses the reaction acetaldehyde + NAD(+) + H2O = acetate + NADH + 2 H(+). It carries out the reaction benzaldehyde + NAD(+) + H2O = benzoate + NADH + 2 H(+). The catalysed reaction is 4-aminobutanal + NAD(+) + H2O = 4-aminobutanoate + NADH + 2 H(+). It participates in cofactor metabolism; retinol metabolism. Inhibited by citral, disulfiram, and cyanamide. Activated by diethylstilbestrol. Inhibited by duocarmycin analogs. Functionally, cytosolic dehydrogenase that catalyzes the irreversible oxidation of a wide range of aldehydes to their corresponding carboxylic acid. Functions downstream of retinol dehydrogenases and catalyzes the oxidation of retinaldehyde into retinoic acid, the second step in the oxidation of retinol/vitamin A into retinoic acid. This pathway is crucial to control the levels of retinol and retinoic acid, two important molecules which excess can be teratogenic and cytotoxic. Also oxidizes aldehydes resulting from lipid peroxidation like (E)-4-hydroxynon-2-enal/HNE, malonaldehyde and hexanal that form protein adducts and are highly cytotoxic. By participating for instance to the clearance of (E)-4-hydroxynon-2-enal/HNE in the lens epithelium prevents the formation of HNE-protein adducts and lens opacification. Also functions downstream of fructosamine-3-kinase in the fructosamine degradation pathway by catalyzing the oxidation of 3-deoxyglucosone, the carbohydrate product of fructosamine 3-phosphate decomposition, which is itself a potent glycating agent that may react with lysine and arginine side-chains of proteins. Also has an aminobutyraldehyde dehydrogenase activity and is probably part of an alternative pathway for the biosynthesis of GABA/4-aminobutanoate in midbrain, thereby playing a role in GABAergic synaptic transmission. This chain is Aldehyde dehydrogenase 1A1, found in Homo sapiens (Human).